The sequence spans 249 residues: 4-hydroxy-tetrahydrodipicolinate reductase (249 aa).

Residues Asp-32, 74–76 (GTT), and 99–102 (SANY) contribute to the NAD(+) site. His-134 acts as the Proton donor/acceptor in catalysis. His-135 is a binding site for (S)-2,3,4,5-tetrahydrodipicolinate. Catalysis depends on Lys-138, which acts as the Proton donor. 144 to 145 (GT) provides a ligand contact to (S)-2,3,4,5-tetrahydrodipicolinate.

It belongs to the DapB family.

It localises to the cytoplasm. It catalyses the reaction (S)-2,3,4,5-tetrahydrodipicolinate + NAD(+) + H2O = (2S,4S)-4-hydroxy-2,3,4,5-tetrahydrodipicolinate + NADH + H(+). The enzyme catalyses (S)-2,3,4,5-tetrahydrodipicolinate + NADP(+) + H2O = (2S,4S)-4-hydroxy-2,3,4,5-tetrahydrodipicolinate + NADPH + H(+). It functions in the pathway amino-acid biosynthesis; L-lysine biosynthesis via DAP pathway; (S)-tetrahydrodipicolinate from L-aspartate: step 4/4. Functionally, catalyzes the conversion of 4-hydroxy-tetrahydrodipicolinate (HTPA) to tetrahydrodipicolinate. The polypeptide is 4-hydroxy-tetrahydrodipicolinate reductase (Chlorobaculum tepidum (strain ATCC 49652 / DSM 12025 / NBRC 103806 / TLS) (Chlorobium tepidum)).